Consider the following 338-residue polypeptide: Taste receptor type 2 member 39 (338 aa).

Residues 1–30 (MLGRCFPPNTKEKQQLRMIKLCDPAESELS) are Extracellular-facing. The helical transmembrane segment at 31–51 (PFLITLTLAVLLAEYLTGIIA) threads the bilayer. Residues 52–74 (NGFITAIHAAEWVQNKSVSTSGR) lie on the Cytoplasmic side of the membrane. Residues 75–95 (ILVFLSVSRIALQSLMMLEIT) traverse the membrane as a helical segment. Residues 96 to 116 (ISSTSLSFYSEDAVYYAFKIS) lie on the Extracellular side of the membrane. The helical transmembrane segment at 117–137 (FIFLNFCSLWFAAWLSFFYFV) threads the bilayer. Residues 138-156 (KIANFSYPLFLKLRWRISG) are Cytoplasmic-facing. Residues 157-177 (LIPWLLWLSVFISFSHSMFCI) form a helical membrane-spanning segment. The Extracellular portion of the chain corresponds to 178 to 205 (NICTGYCDNSFPIHSSNSTEKTYFSEIS). N-linked (GlcNAc...) asparagine glycosylation is present at N194. The helical transmembrane segment at 206 to 226 (VVSLAFFFNLGIVIPLIMFIL) threads the bilayer. Over 227 to 262 (AAILLILSLKRHTLHMGSNATGSKDPSMEAHIGAIK) the chain is Cytoplasmic. Residues 263–283 (ATSYFLILYIFNAVALFIYLS) form a helical membrane-spanning segment. Over 284–291 (NMFDINSL) the chain is Extracellular. Residues 292–312 (WNTLCQIIMAAYPASHSILLI) traverse the membrane as a helical segment. Residues 313-338 (KDNPGLRRAWKQLQHRLHLYPKQWTL) are Cytoplasmic-facing.

The protein belongs to the G-protein coupled receptor T2R family.

Its subcellular location is the membrane. Its function is as follows. Receptor that may play a role in the perception of bitterness and is gustducin-linked. May play a role in sensing the chemical composition of the gastrointestinal content. The activity of this receptor may stimulate alpha gustducin, mediate PLC-beta-2 activation and lead to the gating of TRPM5. The chain is Taste receptor type 2 member 39 (TAS2R39) from Macaca mulatta (Rhesus macaque).